A 591-amino-acid polypeptide reads, in one-letter code: Alpha-(1-&gt;6)-mannopyranosyltransferase Rv1459c (591 aa).

The next 13 membrane-spanning stretches (helical) occupy residues 40–60 (FGAT…ARPV), 80–100 (VSLT…LMLG), 117–137 (TLLL…KDVY), 201–221 (IVAA…LIVW), 235–255 (VSAL…VAGI), 259–279 (ALML…LDMA), 321–341 (EWGP…SSQV), 367–387 (LLLA…ILGW), 408–428 (WMSP…LLGL), 441–461 (AIGV…VLRG), 473–493 (LAVT…WAII), 502–522 (PGFR…GPTA), and 527–547 (FALF…ILLI). The disordered stretch occupies residues 569-591 (ESASKTPATRRPTAAPDAYADST). Over residues 574 to 584 (TPATRRPTAAP) the composition is skewed to low complexity.

It belongs to the MptA/B family.

The protein resides in the membrane. Catalyzes the addition of alpha-(1-&gt;6)-mannose residue. The chain is Alpha-(1-&gt;6)-mannopyranosyltransferase Rv1459c from Mycobacterium tuberculosis (strain ATCC 25618 / H37Rv).